Here is a 390-residue protein sequence, read N- to C-terminus: MPGNSFGELFRITTFGESHGPMVGVVIDGVPAGLPIKKEDIEFELSFRRPGRQFVTGRREKDEPEIVSGVYNGRTTGAPITILVKNTDVISSLYEEIHYKPRPGHADLPYIMKYGFENWDYRGGGRASARETVGRVAASAIAKKLLMLTDTWIAGHLKSLGYVELNEPVTFEEVLCSKYSPVRASKKWLEKKYEELVKQATVEGDSWGGIAEIIVRNPPIGLGEPVFDKLKADLAKALLSIPAVMGFEYGLGFNAAKMKGSEANDEIVKKGDKYRWKFNNSGGILGGLSTGEDILVRCAFKPTSSIRKPQKTIDLRTGEETTISVIGRHDPAVAIRGVSVAEAMVSLVIVDHAMRAGYIPTVRISDDQIKIIEERWNKYISLCKPTQVSQ.

NADP(+) is bound at residue Arg48. FMN-binding positions include 126–128 (RAS), Gly286, 301–305 (KPTSS), and Arg328.

This sequence belongs to the chorismate synthase family. The cofactor is FMNH2.

The enzyme catalyses 5-O-(1-carboxyvinyl)-3-phosphoshikimate = chorismate + phosphate. It functions in the pathway metabolic intermediate biosynthesis; chorismate biosynthesis; chorismate from D-erythrose 4-phosphate and phosphoenolpyruvate: step 7/7. Its function is as follows. Catalyzes the anti-1,4-elimination of the C-3 phosphate and the C-6 proR hydrogen from 5-enolpyruvylshikimate-3-phosphate (EPSP) to yield chorismate, which is the branch point compound that serves as the starting substrate for the three terminal pathways of aromatic amino acid biosynthesis. This reaction introduces a second double bond into the aromatic ring system. The sequence is that of Chorismate synthase from Sulfurisphaera tokodaii (strain DSM 16993 / JCM 10545 / NBRC 100140 / 7) (Sulfolobus tokodaii).